Consider the following 181-residue polypeptide: Peptidyl-tRNA hydrolase (181 aa).

Tyr-14 provides a ligand contact to tRNA. His-19 (proton acceptor) is an active-site residue. Positions 62, 64, and 108 each coordinate tRNA.

Belongs to the PTH family. Monomer.

It is found in the cytoplasm. The enzyme catalyses an N-acyl-L-alpha-aminoacyl-tRNA + H2O = an N-acyl-L-amino acid + a tRNA + H(+). Its function is as follows. Hydrolyzes ribosome-free peptidyl-tRNAs (with 1 or more amino acids incorporated), which drop off the ribosome during protein synthesis, or as a result of ribosome stalling. Functionally, catalyzes the release of premature peptidyl moieties from peptidyl-tRNA molecules trapped in stalled 50S ribosomal subunits, and thus maintains levels of free tRNAs and 50S ribosomes. This is Peptidyl-tRNA hydrolase from Campylobacter jejuni subsp. jejuni serotype O:2 (strain ATCC 700819 / NCTC 11168).